Reading from the N-terminus, the 124-residue chain is Fluoride-specific ion channel FluC (124 aa).

4 consecutive transmembrane segments (helical) span residues 3–23 (IIAI…LSIW), 34–54 (YGTL…LVLA), 66–86 (LLIV…SFET), and 100–120 (LYVL…AGVA). Na(+)-binding residues include Gly-74 and Thr-77.

This sequence belongs to the fluoride channel Fluc/FEX (TC 1.A.43) family.

The protein resides in the cell membrane. The enzyme catalyses fluoride(in) = fluoride(out). Na(+) is not transported, but it plays an essential structural role and its presence is essential for fluoride channel function. Fluoride-specific ion channel. Important for reducing fluoride concentration in the cell, thus reducing its toxicity. The polypeptide is Fluoride-specific ion channel FluC (Roseiflexus sp. (strain RS-1)).